The following is a 243-amino-acid chain: MSNLSAEGFQRCFVLHRRPYSESSLILDVFSEEYGRITLMAKGARSKRSNLKGALQPFTPLLLKWSGKGSMKTLRQAEPISLGLPLFGINLYSAMYVNELVGRVLMAEVPMPALFHDYLHALTELAQCENPEPALRRFELALLSSMGYGVDFLHCAGTGEPVDPEMTYRYREQKGFIASVRRDNLTFLGNELIAISERRFVTKEQLKAAKRFTRIALKPYLGGKPLKSRELFIQTPRARSNGK.

It belongs to the RecO family.

In terms of biological role, involved in DNA repair and RecF pathway recombination. The chain is DNA repair protein RecO from Vibrio parahaemolyticus serotype O3:K6 (strain RIMD 2210633).